A 353-amino-acid polypeptide reads, in one-letter code: MTAILERRESESLWGRFCNWITSTENRLYIGWFGVLMIPTLLTATSVFIIAFIAAPPVDIDGIREPVSGSLLYGNNIISGAIIPTSAAIGLHFYPIWEAASVDEWLYNGGPYELIVLHFLLGVACYMGREWELSFRLGMRPWIAVAYSAPVAAATAVFLIYPIGQGSFSDGMPLGISGTFNFMIVFQAEHNILMHPFHMLGVAGVFGGSLFSAMHGSLVTSSLIRETTENESANEGYRFGQEEETYNIVAAHGYFGRLIFQYAGFNNSRSLHFFLAAWPVVGIWFTALGISTMAFNLNGFNFNQSVVDSQGRVINTWADIINRANLGMEVMHERNAHNFPLDLAAVEAPSING.

Threonine 2 carries the post-translational modification N-acetylthreonine. Threonine 2 carries the post-translational modification Phosphothreonine. Transmembrane regions (helical) follow at residues 29–46 (YIGW…TATS), 118–133 (HFLL…EWEL), and 142–156 (WIAV…AATA). Residue histidine 118 coordinates chlorophyll a. Residue tyrosine 126 coordinates pheophytin a. [CaMn4O5] cluster contacts are provided by aspartate 170 and glutamate 189. A helical membrane pass occupies residues 197–218 (FHMLGVAGVFGGSLFSAMHGSL). Residue histidine 198 coordinates chlorophyll a. Residue histidine 215 coordinates a quinone. Fe cation-binding residues include histidine 215 and histidine 272. A helical transmembrane segment spans residues 274–288 (FLAAWPVVGIWFTAL). Residues histidine 332, glutamate 333, aspartate 342, and alanine 344 each contribute to the [CaMn4O5] cluster site. A propeptide spanning residues 345-353 (AVEAPSING) is cleaved from the precursor.

It belongs to the reaction center PufL/M/PsbA/D family. PSII is composed of 1 copy each of membrane proteins PsbA, PsbB, PsbC, PsbD, PsbE, PsbF, PsbH, PsbI, PsbJ, PsbK, PsbL, PsbM, PsbT, PsbX, PsbY, PsbZ, Psb30/Ycf12, at least 3 peripheral proteins of the oxygen-evolving complex and a large number of cofactors. It forms dimeric complexes. The cofactor is The D1/D2 heterodimer binds P680, chlorophylls that are the primary electron donor of PSII, and subsequent electron acceptors. It shares a non-heme iron and each subunit binds pheophytin, quinone, additional chlorophylls, carotenoids and lipids. D1 provides most of the ligands for the Mn4-Ca-O5 cluster of the oxygen-evolving complex (OEC). There is also a Cl(-1) ion associated with D1 and D2, which is required for oxygen evolution. The PSII complex binds additional chlorophylls, carotenoids and specific lipids.. Tyr-161 forms a radical intermediate that is referred to as redox-active TyrZ, YZ or Y-Z. Post-translationally, C-terminally processed by CTPA; processing is essential to allow assembly of the oxygen-evolving complex and thus photosynthetic growth.

It localises to the plastid. Its subcellular location is the chloroplast thylakoid membrane. It catalyses the reaction 2 a plastoquinone + 4 hnu + 2 H2O = 2 a plastoquinol + O2. Functionally, photosystem II (PSII) is a light-driven water:plastoquinone oxidoreductase that uses light energy to abstract electrons from H(2)O, generating O(2) and a proton gradient subsequently used for ATP formation. It consists of a core antenna complex that captures photons, and an electron transfer chain that converts photonic excitation into a charge separation. The D1/D2 (PsbA/PsbD) reaction center heterodimer binds P680, the primary electron donor of PSII as well as several subsequent electron acceptors. This chain is Photosystem II protein D1, found in Brassica napus (Rape).